The following is a 409-amino-acid chain: Cuticle-degrading serine protease (409 aa).

An N-terminal signal peptide occupies residues 1 to 21 (MLTNGLISLLAIAGLATNAFA). Residues 22-123 (GPIRKVSNAG…VEQDTVVTTY (102 aa)) constitute a propeptide that is removed on maturation. The Inhibitor I9 domain maps to 39–122 (KYIVVLKKGL…YVEQDTVVTT (84 aa)). Positions 130–409 (TWGLDRISHE…PNKIAYNGYA (280 aa)) constitute a Peptidase S8 domain. Residue aspartate 164 is the Charge relay system of the active site. Asparagine 178 carries an N-linked (GlcNAc...) asparagine glycan. The active-site Charge relay system is histidine 200. Asparagine 252 carries N-linked (GlcNAc...) asparagine glycosylation. The active-site Charge relay system is serine 353.

It belongs to the peptidase S8 family.

It localises to the secreted. Inhibited by PMSF, SSI, the peptide Phe-Val and by Phe, but not by EDTA. Its function is as follows. Hydrolyzes gelatin, casein, the chromogenic substrate azocoll and the cuticle of the nematode P.redivivus. Immobilizes P.redivivus. This Arthrobotrys oligospora (strain ATCC 24927 / CBS 115.81 / DSM 1491) (Nematode-trapping fungus) protein is Cuticle-degrading serine protease.